We begin with the raw amino-acid sequence, 140 residues long: Probable glycine cleavage system H protein 3 (140 aa).

Residues 29-110 enclose the Lipoyl-binding domain; the sequence is VVSIGVTDLG…PYDSWIVKIR (82 aa). N6-lipoyllysine is present on K70.

Belongs to the GcvH family. As to quaternary structure, the glycine cleavage system is composed of four proteins: P, T, L and H. The cofactor is (R)-lipoate.

In terms of biological role, the glycine cleavage system catalyzes the degradation of glycine. The H protein shuttles the methylamine group of glycine from the P protein to the T protein. This Saccharolobus solfataricus (strain ATCC 35092 / DSM 1617 / JCM 11322 / P2) (Sulfolobus solfataricus) protein is Probable glycine cleavage system H protein 3.